Reading from the N-terminus, the 279-residue chain is Acetyl-coenzyme A carboxylase carboxyl transferase subunit beta (279 aa).

A CoA carboxyltransferase N-terminal domain is found at 23–279 (MWWKCDECGA…IVRLMTMLAP (257 aa)). Residues C27, C30, C46, and C49 each contribute to the Zn(2+) site. The C4-type zinc finger occupies 27–49 (CDECGAMLHKKQLEDNFYTCSEC).

It belongs to the AccD/PCCB family. As to quaternary structure, acetyl-CoA carboxylase is a heterohexamer composed of biotin carboxyl carrier protein (AccB), biotin carboxylase (AccC) and two subunits each of ACCase subunit alpha (AccA) and ACCase subunit beta (AccD). The cofactor is Zn(2+).

It is found in the cytoplasm. It carries out the reaction N(6)-carboxybiotinyl-L-lysyl-[protein] + acetyl-CoA = N(6)-biotinyl-L-lysyl-[protein] + malonyl-CoA. It functions in the pathway lipid metabolism; malonyl-CoA biosynthesis; malonyl-CoA from acetyl-CoA: step 1/1. In terms of biological role, component of the acetyl coenzyme A carboxylase (ACC) complex. Biotin carboxylase (BC) catalyzes the carboxylation of biotin on its carrier protein (BCCP) and then the CO(2) group is transferred by the transcarboxylase to acetyl-CoA to form malonyl-CoA. This is Acetyl-coenzyme A carboxylase carboxyl transferase subunit beta from Chlorobium phaeobacteroides (strain DSM 266 / SMG 266 / 2430).